The primary structure comprises 743 residues: NAD(P)H-quinone oxidoreductase subunit 5, chloroplastic (743 aa).

16 helical membrane passes run tryptophan 9–phenylalanine 29, tryptophan 40–isoleucine 60, isoleucine 89–isoleucine 109, phenylalanine 125–isoleucine 145, isoleucine 147–threonine 167, glycine 185–phenylalanine 205, asparagine 219–alanine 239, threonine 258–alanine 278, phenylalanine 284–phenylalanine 304, leucine 327–isoleucine 347, alanine 354–cysteine 374, asparagine 396–serine 416, tryptophan 425–tyrosine 445, leucine 551–phenylalanine 571, valine 607–valine 627, and tyrosine 723–leucine 743.

It belongs to the complex I subunit 5 family. As to quaternary structure, NDH is composed of at least 16 different subunits, 5 of which are encoded in the nucleus.

Its subcellular location is the plastid. The protein resides in the chloroplast thylakoid membrane. It catalyses the reaction a plastoquinone + NADH + (n+1) H(+)(in) = a plastoquinol + NAD(+) + n H(+)(out). The enzyme catalyses a plastoquinone + NADPH + (n+1) H(+)(in) = a plastoquinol + NADP(+) + n H(+)(out). Functionally, NDH shuttles electrons from NAD(P)H:plastoquinone, via FMN and iron-sulfur (Fe-S) centers, to quinones in the photosynthetic chain and possibly in a chloroplast respiratory chain. The immediate electron acceptor for the enzyme in this species is believed to be plastoquinone. Couples the redox reaction to proton translocation, and thus conserves the redox energy in a proton gradient. The protein is NAD(P)H-quinone oxidoreductase subunit 5, chloroplastic (ndhF) of Ambrosia trifida (Giant ragweed).